Here is a 185-residue protein sequence, read N- to C-terminus: Ribosome-recycling factor (185 aa).

It belongs to the RRF family.

The protein localises to the cytoplasm. Its function is as follows. Responsible for the release of ribosomes from messenger RNA at the termination of protein biosynthesis. May increase the efficiency of translation by recycling ribosomes from one round of translation to another. This chain is Ribosome-recycling factor, found in Teredinibacter turnerae (strain ATCC 39867 / T7901).